A 169-amino-acid polypeptide reads, in one-letter code: Peptide deformylase 1 (169 aa).

The Fe cation site is built by Cys-93 and His-135. The active site involves Glu-136. His-139 is a binding site for Fe cation.

This sequence belongs to the polypeptide deformylase family. It depends on Fe(2+) as a cofactor.

The catalysed reaction is N-terminal N-formyl-L-methionyl-[peptide] + H2O = N-terminal L-methionyl-[peptide] + formate. Its function is as follows. Removes the formyl group from the N-terminal Met of newly synthesized proteins. Requires at least a dipeptide for an efficient rate of reaction. N-terminal L-methionine is a prerequisite for activity but the enzyme has broad specificity at other positions. The chain is Peptide deformylase 1 from Corynebacterium glutamicum (strain ATCC 13032 / DSM 20300 / JCM 1318 / BCRC 11384 / CCUG 27702 / LMG 3730 / NBRC 12168 / NCIMB 10025 / NRRL B-2784 / 534).